Consider the following 359-residue polypeptide: AA9 family lytic polysaccharide monooxygenase C (359 aa).

Residues 1-16 form the signal peptide; sequence MKTGSILAALVASASA. His-17 and His-99 together coordinate Cu(2+). 2 disulfide bridges follow: Cys-55-Cys-185 and Cys-155-Cys-243. The O2 site is built by His-171 and Gln-180. Tyr-182 serves as a coordination point for Cu(2+). Residues Asn-189 and Asn-284 are each glycosylated (N-linked (GlcNAc...) asparagine). Residues 244 to 320 are disordered; that stretch reads PAGGSGGSSP…NPQPTNGGNS (77 aa). A compositionally biased stretch (low complexity) spans 251–296; that stretch reads SSPAPATTASTPKPTSASAPKPVSTTASTPKPTNGSGSGTGAAHST. Over residues 307 to 319 the composition is skewed to polar residues; sequence TKASNPQPTNGGN. A CBM1 domain is found at 323 to 358; the sequence is RAAALYGQCGGKGWTGPTSCASGTCKFSNDWYSQCL.

This sequence belongs to the polysaccharide monooxygenase AA9 family. Requires Cu(2+) as cofactor.

Its subcellular location is the secreted. It carries out the reaction [(1-&gt;4)-beta-D-glucosyl]n+m + reduced acceptor + O2 = 4-dehydro-beta-D-glucosyl-[(1-&gt;4)-beta-D-glucosyl]n-1 + [(1-&gt;4)-beta-D-glucosyl]m + acceptor + H2O.. Activity in inhibited by excessive amounts of H(2)O(2). In terms of biological role, lytic polysaccharide monooxygenase (LPMO) that depolymerizes crystalline and amorphous polysaccharides via the oxidation of scissile alpha- or beta-(1-4)-glycosidic bonds, yielding C4 oxidation products. Catalysis by LPMOs requires the reduction of the active-site copper from Cu(II) to Cu(I) by a reducing agent and H(2)O(2) or O(2) as a cosubstrate. Degrades various hemicelluloses, in particular xyloglucan. Active on tamarind xyloglucan and konjac glucomannan. Acts on the glucose backbone of xyloglucan, accepting various substitutions (xylose, galactose) in almost allpositions. In contrast to all previously characterized LPMOs, which are active only on polysaccharides, is able to cleave soluble cello-oligosaccharides as short as a tetramer. The cello-oligosaccharide products released by this enzyme contain a C4 gemdiol/keto group at the non-reducing end. Binds to the inner wood cell wall layer and consumes enzymatically generated H(2)O(2). The protein is AA9 family lytic polysaccharide monooxygenase C (gh61-3) of Neurospora crassa (strain ATCC 24698 / 74-OR23-1A / CBS 708.71 / DSM 1257 / FGSC 987).